The primary structure comprises 97 residues: DNA/RNA-binding protein Alba (97 aa).

K15 is subject to N6-acetyllysine.

It belongs to the histone-like Alba family. Acetylated. Acetylation at Lys-15 decreases DNA-binding affinity.

It is found in the cytoplasm. It localises to the chromosome. Its function is as follows. Binds double-stranded DNA tightly but without sequence specificity. Involved in DNA compaction. In Sulfolobus acidocaldarius (strain ATCC 33909 / DSM 639 / JCM 8929 / NBRC 15157 / NCIMB 11770), this protein is DNA/RNA-binding protein Alba.